The sequence spans 185 residues: Calcium-binding protein K-like (185 aa).

2 EF-hand domains span residues 60-95 (WDEASMVRMFKLFDSDGNGVIDVKEFITALYMMTRA) and 96-131 (PTTDKLGFLFDLFDSDKSGYLEAGEIEKLVNIVVVC). Ca(2+) contacts are provided by Asp-73, Asp-75, Asn-77, Glu-84, Asp-109, Asp-111, Ser-113, Tyr-115, and Glu-120.

It belongs to the recoverin family.

This chain is Calcium-binding protein K-like, found in Dictyostelium discoideum (Social amoeba).